Consider the following 302-residue polypeptide: Oxygen-dependent coproporphyrinogen-III oxidase (302 aa).

Residue serine 94 coordinates substrate. Residues histidine 98 and histidine 108 each coordinate a divalent metal cation. Residue histidine 108 is the Proton donor of the active site. 110–112 serves as a coordination point for substrate; that stretch reads NVR. 2 residues coordinate a divalent metal cation: histidine 147 and histidine 177. Residues 242-277 form an important for dimerization region; that stretch reads YVEFNLVYDRGTLFGLQTGGRTESILMSMPPLARWE. 260–262 is a substrate binding site; that stretch reads GGR.

Belongs to the aerobic coproporphyrinogen-III oxidase family. As to quaternary structure, homodimer. It depends on a divalent metal cation as a cofactor.

The protein resides in the cytoplasm. The catalysed reaction is coproporphyrinogen III + O2 + 2 H(+) = protoporphyrinogen IX + 2 CO2 + 2 H2O. Its pathway is porphyrin-containing compound metabolism; protoporphyrin-IX biosynthesis; protoporphyrinogen-IX from coproporphyrinogen-III (O2 route): step 1/1. In terms of biological role, involved in the heme biosynthesis. Catalyzes the aerobic oxidative decarboxylation of propionate groups of rings A and B of coproporphyrinogen-III to yield the vinyl groups in protoporphyrinogen-IX. In Aeromonas salmonicida (strain A449), this protein is Oxygen-dependent coproporphyrinogen-III oxidase.